Reading from the N-terminus, the 222-residue chain is MSSTTTDSTELQNLIKLFQNCQTHPRQHFPAKSSAVLVCLYQEQREDKNELRVILTKRSTTLSSHPGEVALPGGKRDQEDKDDIATALREAREEIGLDPSLVTIISVLEPFVNKKGMSVAPVIGFLHDKKAFKQLPNPAEVEEIFDVPLEMFLKDRNRRAEEREHEGERYLLQYFDYYSEDKERSFIIWALTAGILIRVASIVYQRLPEFQERKPSFWNQPN.

Residues 31-175 form the Nudix hydrolase domain; it reads AKSSAVLVCL…EGERYLLQYF (145 aa). The Nudix box motif lies at 73–96; the sequence is GGKRDQEDKDDIATALREAREEIG. Positions 90 and 94 each coordinate Mg(2+). Residues 186–204 traverse the membrane as a helical segment; it reads FIIWALTAGILIRVASIVY.

This sequence belongs to the Nudix hydrolase family. PCD1 subfamily. Requires Mn(2+) as cofactor. Mg(2+) serves as cofactor. Expressed in roots, stems and leaves.

It localises to the peroxisome membrane. Its function is as follows. Coenzyme A diphosphatase which mediates the cleavage of CoA into 3',5'-ADP from CoA and 4'-phosphopantetheine. Can use malonyl-CoA, hexanoyl-CoA, lauroyl-CoA, myristoyl-CoA and palmitoyl-CoA as substrates, but not isobutyryl-CoA or propionyl-CoA. This Arabidopsis thaliana (Mouse-ear cress) protein is Nudix hydrolase 11 (NUDT11).